We begin with the raw amino-acid sequence, 120 residues long: Peptidyl-tRNA hydrolase (120 aa).

It belongs to the PTH2 family. As to quaternary structure, homodimer.

Its subcellular location is the cytoplasm. It catalyses the reaction an N-acyl-L-alpha-aminoacyl-tRNA + H2O = an N-acyl-L-amino acid + a tRNA + H(+). In terms of biological role, the natural substrate for this enzyme may be peptidyl-tRNAs which drop off the ribosome during protein synthesis. In Saccharolobus solfataricus (strain ATCC 35092 / DSM 1617 / JCM 11322 / P2) (Sulfolobus solfataricus), this protein is Peptidyl-tRNA hydrolase.